Consider the following 303-residue polypeptide: UDP-N-acetylenolpyruvoylglucosamine reductase (303 aa).

The 168-residue stretch at 28-195 (KTGGPAQYLA…ISATFGLEPG (168 aa)) folds into the FAD-binding PCMH-type domain. Residue Arg174 is part of the active site. The active-site Proton donor is Ser224. Glu294 is an active-site residue.

The protein belongs to the MurB family. FAD is required as a cofactor.

It localises to the cytoplasm. The catalysed reaction is UDP-N-acetyl-alpha-D-muramate + NADP(+) = UDP-N-acetyl-3-O-(1-carboxyvinyl)-alpha-D-glucosamine + NADPH + H(+). The protein operates within cell wall biogenesis; peptidoglycan biosynthesis. Its function is as follows. Cell wall formation. This is UDP-N-acetylenolpyruvoylglucosamine reductase from Lactobacillus gasseri (strain ATCC 33323 / DSM 20243 / BCRC 14619 / CIP 102991 / JCM 1131 / KCTC 3163 / NCIMB 11718 / NCTC 13722 / AM63).